A 404-amino-acid chain; its full sequence is MKRTVIMMLDSFGVGAAGDAAKFGDLGSDTFGHIAKACAEGEADIGREGPLTLPNLARLGLAHAAMESTGAFAPGFADNVELIGAYGHAQELSSGKDTPSGHWEMAGVPVLFEWGYFSEHQNSFPKELTDKILARAGLDGFLGNCHASGTTILEELGEEHMRSGKPIFYTSADSVFQIACHEGTFGLENLYRLCEIAREELEPYNIGRVIARPFDGTGPSDFARTGNRKDYSLEPPAKTVLDKLKAAGGEVVSVGKIADIYAYCGITKKVKANGLEALFDATLAEVKSAGENTIVFTNFVDFDSHYGHRRDVAGYAKGLEYFDSRLPEMLALLDEDDLLILTADHGCDPTWQGTDHTREYVPVLAYGAGLKAGSLGRRNSFADIGQSIASYFKLEPMEYGESFI.

Positions 10, 303, 308, 344, 345, and 356 each coordinate Mn(2+).

It belongs to the phosphopentomutase family. It depends on Mn(2+) as a cofactor.

The protein localises to the cytoplasm. It carries out the reaction 2-deoxy-alpha-D-ribose 1-phosphate = 2-deoxy-D-ribose 5-phosphate. The catalysed reaction is alpha-D-ribose 1-phosphate = D-ribose 5-phosphate. Its pathway is carbohydrate degradation; 2-deoxy-D-ribose 1-phosphate degradation; D-glyceraldehyde 3-phosphate and acetaldehyde from 2-deoxy-alpha-D-ribose 1-phosphate: step 1/2. Functionally, isomerase that catalyzes the conversion of deoxy-ribose 1-phosphate (dRib-1-P) and ribose 1-phosphate (Rib-1-P) to deoxy-ribose 5-phosphate (dRib-5-P) and ribose 5-phosphate (Rib-5-P), respectively. The polypeptide is Phosphopentomutase (Shewanella sp. (strain ANA-3)).